The primary structure comprises 282 residues: MTDLTQLEMIIEKAFDDRNSINTTTKGEILESVEHALNLLDKGEVRVVKRQKNGKWHVHQWLKKAVLLSFRLNPMQIMTGGVNGTSWWDKVPSKFSHWQEADFKKADFRSVPGAIVRHSAYIAPNVILMPSFVNLGAFVDEGTMVDTWATVGSCAQIGKHVHLSGGVGIGGVLEPLQANPTIIEDHCFIGARSEVVEGCIIREGSVLGMGVFIGKSTKIIDRTTGEIFIGEVPPYSVVVPGSLPGKPLPNGEIGPNLYCAVIVKRVDQKTREKTSINDLLRD.

Residues Arg109 and Asp146 each contribute to the substrate site.

Belongs to the transferase hexapeptide repeat family. Homotrimer.

It localises to the cytoplasm. It catalyses the reaction (S)-2,3,4,5-tetrahydrodipicolinate + succinyl-CoA + H2O = (S)-2-succinylamino-6-oxoheptanedioate + CoA. It functions in the pathway amino-acid biosynthesis; L-lysine biosynthesis via DAP pathway; LL-2,6-diaminopimelate from (S)-tetrahydrodipicolinate (succinylase route): step 1/3. The sequence is that of 2,3,4,5-tetrahydropyridine-2,6-dicarboxylate N-succinyltransferase from Bartonella henselae (strain ATCC 49882 / DSM 28221 / CCUG 30454 / Houston 1) (Rochalimaea henselae).